We begin with the raw amino-acid sequence, 199 residues long: N-(5'-phosphoribosyl)anthranilate isomerase (199 aa).

This sequence belongs to the TrpF family.

It catalyses the reaction N-(5-phospho-beta-D-ribosyl)anthranilate = 1-(2-carboxyphenylamino)-1-deoxy-D-ribulose 5-phosphate. Its pathway is amino-acid biosynthesis; L-tryptophan biosynthesis; L-tryptophan from chorismate: step 3/5. The sequence is that of N-(5'-phosphoribosyl)anthranilate isomerase from Lacticaseibacillus paracasei (strain ATCC 334 / BCRC 17002 / CCUG 31169 / CIP 107868 / KCTC 3260 / NRRL B-441) (Lactobacillus paracasei).